A 53-amino-acid polypeptide reads, in one-letter code: Tsetse thrombin inhibitor (53 aa).

A signal peptide spans 1-21; the sequence is MKFFTVLFFLLSIIYLIVAAP.

In terms of tissue distribution, expressed at high levels in salivary glands and midguts of adult tsetse flies.

It localises to the secreted. Potent and specific inhibitor of human thrombin. It is also a potent inhibitor of thrombin-induced platelet aggregation. It is capable of antagonizing host hemostasis and facilitating blood feeding. The polypeptide is Tsetse thrombin inhibitor (TTI) (Glossina morsitans morsitans (Savannah tsetse fly)).